The primary structure comprises 208 residues: T-cell surface glycoprotein CD8 beta chain (208 aa).

The signal sequence occupies residues 1–21 (MQPWLWLVFSVKLSALWGSSA). An Ig-like V-type domain is found at 22-131 (LLQTPSSLLV…MVVFGTGTKL (110 aa)). Over 22 to 168 (LLQTPSSLLV…KTQKGLTCGL (147 aa)) the chain is Extracellular. Residues N34, N88, and N94 are each glycosylated (N-linked (GlcNAc...) asparagine). An intrachain disulfide couples C41 to C115. A helical transmembrane segment spans residues 169 to 189 (ITLSLLVACILVLLVSLSVAI). The Cytoplasmic portion of the chain corresponds to 190–208 (HFHCMRRRARIHFMKQFHK).

In terms of assembly, forms disulfide-linked heterodimers with CD8A at the cell surface. Interacts with CD3D; this interaction couples TCR-CD3 with CD8. Interacts with LCK. In terms of processing, phosphorylated as a consequence of T-cell activation. Palmitoylated at the cytoplasmic tail and thereby targets the heterodimer CD8A/CD8B to lipid rafts unlike CD8A homodimers.

It is found in the cell membrane. Functionally, integral membrane glycoprotein that plays an essential role in the immune response and serves multiple functions in responses against both external and internal offenses. In T-cells, functions primarily as a coreceptor for MHC class I molecule:peptide complex. The antigens presented by class I peptides are derived from cytosolic proteins while class II derived from extracellular proteins. Interacts simultaneously with the T-cell receptor (TCR) and the MHC class I proteins presented by antigen presenting cells (APCs). In turn, recruits the Src kinase LCK to the vicinity of the TCR-CD3 complex. A palmitoylation site in the cytoplasmic tail of CD8B chain contributes to partitioning of CD8 into the plasma membrane lipid rafts where signaling proteins are enriched. Once LCK recruited, it initiates different intracellular signaling pathways by phosphorylating various substrates ultimately leading to lymphokine production, motility, adhesion and activation of cytotoxic T-lymphocytes (CTLs). Additionally, plays a critical role in thymic selection of CD8+ T-cells. The polypeptide is T-cell surface glycoprotein CD8 beta chain (Cd8b) (Rattus norvegicus (Rat)).